The chain runs to 244 residues: Phosphonates import ATP-binding protein PhnC (244 aa).

The ABC transporter domain occupies 6–244 (IECHNLETAY…LQAQFVVNSQ (239 aa)). Position 41-48 (41-48 (GLNGAGKS)) interacts with ATP.

The protein belongs to the ABC transporter superfamily. Phosphonates importer (TC 3.A.1.9.1) family. The complex is composed of two ATP-binding proteins (PhnC), two transmembrane proteins (PhnE) and a solute-binding protein (PhnD).

It is found in the cell inner membrane. The enzyme catalyses phosphonate(out) + ATP + H2O = phosphonate(in) + ADP + phosphate + H(+). In terms of biological role, part of the ABC transporter complex PhnCDE involved in phosphonates import. Responsible for energy coupling to the transport system. In Trichormus variabilis (strain ATCC 29413 / PCC 7937) (Anabaena variabilis), this protein is Phosphonates import ATP-binding protein PhnC.